We begin with the raw amino-acid sequence, 245 residues long: 2-C-methyl-D-erythritol 4-phosphate cytidylyltransferase (245 aa).

It belongs to the IspD/TarI cytidylyltransferase family. IspD subfamily.

It carries out the reaction 2-C-methyl-D-erythritol 4-phosphate + CTP + H(+) = 4-CDP-2-C-methyl-D-erythritol + diphosphate. The protein operates within isoprenoid biosynthesis; isopentenyl diphosphate biosynthesis via DXP pathway; isopentenyl diphosphate from 1-deoxy-D-xylulose 5-phosphate: step 2/6. Functionally, catalyzes the formation of 4-diphosphocytidyl-2-C-methyl-D-erythritol from CTP and 2-C-methyl-D-erythritol 4-phosphate (MEP). The chain is 2-C-methyl-D-erythritol 4-phosphate cytidylyltransferase from Chloroherpeton thalassium (strain ATCC 35110 / GB-78).